Here is a 382-residue protein sequence, read N- to C-terminus: Carbamoyl phosphate synthase small chain (382 aa).

The interval 1–189 (MIKSALLVLE…GLPEAKSEDD (189 aa)) is CPSase. L-glutamine contacts are provided by Ser47 and Gly241. The Glutamine amidotransferase type-1 domain occupies 193 to 380 (HVVAYDFGAK…IELIKHYRSS (188 aa)). Catalysis depends on Cys269, which acts as the Nucleophile. 5 residues coordinate L-glutamine: Leu270, Gln273, Asn311, Gly313, and Phe314. Active-site residues include His353 and Glu355.

Belongs to the CarA family. In terms of assembly, composed of two chains; the small (or glutamine) chain promotes the hydrolysis of glutamine to ammonia, which is used by the large (or ammonia) chain to synthesize carbamoyl phosphate. Tetramer of heterodimers (alpha,beta)4.

It carries out the reaction hydrogencarbonate + L-glutamine + 2 ATP + H2O = carbamoyl phosphate + L-glutamate + 2 ADP + phosphate + 2 H(+). The enzyme catalyses L-glutamine + H2O = L-glutamate + NH4(+). Its pathway is amino-acid biosynthesis; L-arginine biosynthesis; carbamoyl phosphate from bicarbonate: step 1/1. It functions in the pathway pyrimidine metabolism; UMP biosynthesis via de novo pathway; (S)-dihydroorotate from bicarbonate: step 1/3. In terms of biological role, small subunit of the glutamine-dependent carbamoyl phosphate synthetase (CPSase). CPSase catalyzes the formation of carbamoyl phosphate from the ammonia moiety of glutamine, carbonate, and phosphate donated by ATP, constituting the first step of 2 biosynthetic pathways, one leading to arginine and/or urea and the other to pyrimidine nucleotides. The small subunit (glutamine amidotransferase) binds and cleaves glutamine to supply the large subunit with the substrate ammonia. The protein is Carbamoyl phosphate synthase small chain of Salmonella typhi.